A 174-amino-acid polypeptide reads, in one-letter code: Guided entry of tail-anchored proteins factor 1 (174 aa).

At 1-8 (MSASETDR) the chain is on the lumenal side. The helical transmembrane segment at 9–29 (WAWLLVLCFVFGCNVLRILLP) threads the bilayer. The Cytoplasmic portion of the chain corresponds to 30 to 99 (TLSSFISRVL…VKARTAQLAK (70 aa)). Residues 39-94 (LQKDAEQESQMRAEIQSMKQELSTVNMMDEFARYARLERKINKMTDKLKTHVKART) adopt a coiled-coil conformation. The interval 39–97 (LQKDAEQESQMRAEIQSMKQELSTVNMMDEFARYARLERKINKMTDKLKTHVKARTAQL) is interaction with GET3/TRC40. The chain crosses the membrane as a helical span at residues 100-120 (IKWFISVAFYVLQAALMISLI). Over 121-148 (WKYYSVPVAVVPSKWITPLDRLVAFPTR) the chain is Lumenal. The chain crosses the membrane as a helical span at residues 149–169 (VAGGIGVTCWILVCNKVVAII). At 170 to 174 (LHPFS) the chain is on the cytoplasmic side.

The protein belongs to the WRB/GET1 family. Component of the Golgi to ER traffic (GET) complex, which is composed of GET1, CAMLG/GET2 and GET3. Within the complex, GET1 and CAMLG form a heterotetramer which is stabilized by phosphatidylinositol binding and which binds to the GET3 homodimer. Interacts with CAMLG/GET2 (via C-terminus). GET3 shows a higher affinity for CAMLG than for GET1.

It is found in the endoplasmic reticulum membrane. Its function is as follows. Required for the post-translational delivery of tail-anchored (TA) proteins to the endoplasmic reticulum. Together with CAMLG/GET2, acts as a membrane receptor for soluble GET3/TRC40, which recognizes and selectively binds the transmembrane domain of TA proteins in the cytosol. Required to ensure correct topology and ER insertion of CAMLG. The polypeptide is Guided entry of tail-anchored proteins factor 1 (Rattus norvegicus (Rat)).